The following is a 287-amino-acid chain: Membrane protein insertase YidC 2 (287 aa).

Residues 1–26 form the signal peptide; it reads MKKKKRFKQKLLIASLVIGLMAVLSG. The N-palmitoyl cysteine moiety is linked to residue cysteine 27. Cysteine 27 carries S-diacylglycerol cysteine lipidation. The next 5 membrane-spanning stretches (helical) occupy residues 65-85, 135-155, 178-198, 207-224, and 228-250; these read YAVGIIVVTILIRLLIMPLMI, MMGCLPLLIQMPILLGFYQAI, YILPVVAALTTFLSSKISMMG, AMIVYIMPVMILFMGITL, and LALYWIIGNIFTVFQTLLINNPF.

The protein belongs to the OXA1/ALB3/YidC family. Type 2 subfamily.

The protein resides in the cell membrane. In terms of biological role, required for the insertion and/or proper folding and/or complex formation of integral membrane proteins into the membrane. Involved in integration of membrane proteins that insert both dependently and independently of the Sec translocase complex, as well as at least some lipoproteins. This is Membrane protein insertase YidC 2 from Listeria monocytogenes serovar 1/2a (strain ATCC BAA-679 / EGD-e).